The chain runs to 302 residues: Methionyl-tRNA formyltransferase (302 aa).

108 to 111 (SLLP) is a binding site for (6S)-5,6,7,8-tetrahydrofolate. Residues 279–288 (KRPMEPEEFL) are compositionally biased toward basic and acidic residues. A disordered region spans residues 279 to 302 (KRPMEPEEFLRGFPLPEGSRAHTS).

It belongs to the Fmt family.

It catalyses the reaction L-methionyl-tRNA(fMet) + (6R)-10-formyltetrahydrofolate = N-formyl-L-methionyl-tRNA(fMet) + (6S)-5,6,7,8-tetrahydrofolate + H(+). Its function is as follows. Attaches a formyl group to the free amino group of methionyl-tRNA(fMet). The formyl group appears to play a dual role in the initiator identity of N-formylmethionyl-tRNA by promoting its recognition by IF2 and preventing the misappropriation of this tRNA by the elongation apparatus. This is Methionyl-tRNA formyltransferase from Cereibacter sphaeroides (strain ATCC 17023 / DSM 158 / JCM 6121 / CCUG 31486 / LMG 2827 / NBRC 12203 / NCIMB 8253 / ATH 2.4.1.) (Rhodobacter sphaeroides).